The sequence spans 510 residues: ATP synthase subunit alpha (510 aa).

169–176 (GDRQTGKT) contacts ATP.

Belongs to the ATPase alpha/beta chains family. F-type ATPases have 2 components, CF(1) - the catalytic core - and CF(0) - the membrane proton channel. CF(1) has five subunits: alpha(3), beta(3), gamma(1), delta(1), epsilon(1). CF(0) has three main subunits: a(1), b(2) and c(9-12). The alpha and beta chains form an alternating ring which encloses part of the gamma chain. CF(1) is attached to CF(0) by a central stalk formed by the gamma and epsilon chains, while a peripheral stalk is formed by the delta and b chains.

It is found in the cell inner membrane. It catalyses the reaction ATP + H2O + 4 H(+)(in) = ADP + phosphate + 5 H(+)(out). Its function is as follows. Produces ATP from ADP in the presence of a proton gradient across the membrane. The alpha chain is a regulatory subunit. The chain is ATP synthase subunit alpha from Rickettsia massiliae (strain Mtu5).